A 180-amino-acid polypeptide reads, in one-letter code: Inner membrane-spanning protein YciB (180 aa).

The next 5 helical transmembrane spans lie at 22-42 (IFVA…FTWF), 50-70 (MTLV…AFHS), 72-92 (LFIK…LLVS), 121-141 (MSWA…AFWL), and 149-169 (FKVF…GVYI).

Belongs to the YciB family.

Its subcellular location is the cell inner membrane. Functionally, plays a role in cell envelope biogenesis, maintenance of cell envelope integrity and membrane homeostasis. This Yersinia enterocolitica serotype O:8 / biotype 1B (strain NCTC 13174 / 8081) protein is Inner membrane-spanning protein YciB.